A 398-amino-acid polypeptide reads, in one-letter code: Ribosomal RNA large subunit methyltransferase I (398 aa).

In terms of domain architecture, PUA spans 2-79; the sequence is SVRLVLAKGR…LSESIDIAFF (78 aa).

This sequence belongs to the methyltransferase superfamily. RlmI family.

The protein resides in the cytoplasm. It catalyses the reaction cytidine(1962) in 23S rRNA + S-adenosyl-L-methionine = 5-methylcytidine(1962) in 23S rRNA + S-adenosyl-L-homocysteine + H(+). Functionally, specifically methylates the cytosine at position 1962 (m5C1962) of 23S rRNA. The chain is Ribosomal RNA large subunit methyltransferase I from Shigella dysenteriae serotype 1 (strain Sd197).